We begin with the raw amino-acid sequence, 371 residues long: Putative RNA-binding protein Luc7-like 1 (371 aa).

Coiled-coil stretches lie at residues 87–177 (MDHL…RNSM) and 218–259 (FIQI…LSRR). Basic and acidic residues predominate over residues 232 to 257 (VAEKQEKRNQDRLRRREEREREERLS). The interval 232–371 (VAEKQEKRNQ…RSEEKEAGEI (140 aa)) is disordered. Over residues 258–317 (RRSGSRTRDRRRSRSRDRRRRRSRSTSRERRKLSRSRSRDRHRRHRSRSRSHSRGHRRAS) the composition is skewed to basic residues. 2 stretches are compositionally biased toward basic and acidic residues: residues 318-351 (RDRS…DWRL) and 361-371 (RRSEEKEAGEI). Residues Ser-332, Ser-336, and Ser-363 each carry the phosphoserine modification.

This sequence belongs to the Luc7 family. Ubiquitous.

Its function is as follows. May bind to RNA via its Arg/Ser-rich domain. The protein is Putative RNA-binding protein Luc7-like 1 (LUC7L) of Homo sapiens (Human).